The chain runs to 622 residues: Chaperone protein HscA homolog (622 aa).

The protein belongs to the heat shock protein 70 family.

Chaperone involved in the maturation of iron-sulfur cluster-containing proteins. Has a low intrinsic ATPase activity which is markedly stimulated by HscB. The polypeptide is Chaperone protein HscA homolog (Methylobacillus flagellatus (strain ATCC 51484 / DSM 6875 / VKM B-1610 / KT)).